The sequence spans 930 residues: Pyruvate dehydrogenase E1 component (930 aa).

Over residues 1-10 (MTTDFARHDL) the composition is skewed to basic and acidic residues. Residues 1-21 (MTTDFARHDLAQNSNSASEPD) are disordered. An Isoglutamyl lysine isopeptide (Lys-Gln) (interchain with Q-Cter in protein Pup) cross-link involves residue Lys-375.

Homodimer. Part of the PDH complex, consisting of multiple copies of AceE (E1), DlaT (E2) and Lpd (E3). The cofactor is Mg(2+). Thiamine diphosphate serves as cofactor.

The enzyme catalyses N(6)-[(R)-lipoyl]-L-lysyl-[protein] + pyruvate + H(+) = N(6)-[(R)-S(8)-acetyldihydrolipoyl]-L-lysyl-[protein] + CO2. Component of the pyruvate dehydrogenase (PDH) complex, that catalyzes the overall conversion of pyruvate to acetyl-CoA and CO(2). AceE has reductase activity with pyruvate but does not react with 2-oxoglutarate. In Mycobacterium tuberculosis (strain ATCC 25618 / H37Rv), this protein is Pyruvate dehydrogenase E1 component (aceE).